The chain runs to 246 residues: UPF0736 protein GK0808 (246 aa).

The protein belongs to the UPF0736 family.

The chain is UPF0736 protein GK0808 from Geobacillus kaustophilus (strain HTA426).